The following is a 1081-amino-acid chain: MAQRNPEPTIRVLYATDSCVITYSLMLLTGQESSEGVYAISYDWSSELDDLFGRQPRAPNTDAGDGWSSTEQSDADQLATALLQRKPSVSFCLLSGMVGGASDEPQDRVRPMFVCVFSTWTGARALAMTLSHGHPLSSNTLLQALTEEATFLLHNDLILALAITTENVTARSGRTAAAAKYDPQRGSVKAAVIGHSTGRSGLTSVYIHHENKVLTAFRRLYCNNNTTPFWFASKFGPGEREIVLATRYYLFQAIRCSRSGGTYDLQAVKDFIRTYNVPAAPNPTGLDLTHLTSFSLLSKFCCQSWYSRGPCALALPRYVDLRIQADVAEVSALEGFIAADRQGLRVSDREFITYIYLAHFESFNRKQLYDHLLAVSIADPGDIDRITSTSSLKRGTIEKFFAQVRIQLNIRDYIAHNVNPRVVCLPASIGSQYAQDKTYTPSSTTMSTGSAPLGVCDTSTPILKLLDRVESSLAGRGWIQTIVSPNKPQSVHSTPPLDQSRGDELSPGVSSQCGISRRLLHIASSPPVNGRALPLEVLFGQKGVPGPAPVYRVALPSKRQAFAVIANDRWETTTQNLARPGGSKQAYEGGFALAGFGEIDDCSLAWRDLQLTRTTSGVCRTALASSNASAQMYINRNEIFNSSLAVSNIILDVDFGIKRRVPLGMLHLAMRGFRAGIITTLSLIFSDATVQWDSYPCYFYKTSCPPQLVRALHRGEPSSFPDYVDGVEECYMESDFIDDYAAMEEYTDGPMDDYEMMMVDNECPQAACDNTPPNKEGGKTPLQRLDDTDACECTEKMGFRVTVPVPPPYLLAGPEALRGLARIIQQAVVLERTFTESMCSVLRDFSFIDTGVYSHGRSLRLPFFCKVGDSGEVYGGLYPFYVIPPKCNDVDEFVAQHSNPANFHFHAAPRHPTITHVITDLGGDYVSFFERKVARNREAIMTKRATLESLLSSANVSIKSHEAVEAFVVDVVLGEVVSHLATHFPDQSGEYQTVGVHTVVTKPDWILMQINRSGNAYRSQGFSCLRAKHLRSARGLARTFLSISADVHGRLCASISQQCFATKCGNNKMCTIFTLEVDRAK.

Over residues 484-497 the composition is skewed to polar residues; it reads SPNKPQSVHSTPPL. Residues 484–508 form a disordered region; that stretch reads SPNKPQSVHSTPPLDQSRGDELSPG. The segment at 1024–1064 adopts a CHC2-type zinc-finger fold; sequence CLRAKHLRSARGLARTFLSISADVHGRLCASISQQCFATKC.

This sequence belongs to the herpesviridae DNA primase family. In terms of assembly, associates with the helicase and the primase-associated factor to form the helicase-primase factor.

Its subcellular location is the host nucleus. Essential component of the helicase/primase complex. Unwinds the DNA at the replication forks and generates single-stranded DNA for both leading and lagging strand synthesis. The primase initiates primer synthesis and thereby produces large amount of short RNA primers on the lagging strand that the polymerase elongates using dNTPs. The sequence is that of DNA primase from Equus caballus (Horse).